We begin with the raw amino-acid sequence, 369 residues long: tRNA 2-selenouridine synthase (369 aa).

The region spanning 15–138 (FLNQHPMMDV…MRQYLIGVIE (124 aa)) is the Rhodanese domain. The active-site S-selanylcysteine intermediate is Cys98.

It belongs to the SelU family. As to quaternary structure, monomer.

It carries out the reaction 5-methylaminomethyl-2-thiouridine(34) in tRNA + selenophosphate + (2E)-geranyl diphosphate + H2O + H(+) = 5-methylaminomethyl-2-selenouridine(34) in tRNA + (2E)-thiogeraniol + phosphate + diphosphate. The enzyme catalyses 5-methylaminomethyl-2-thiouridine(34) in tRNA + (2E)-geranyl diphosphate = 5-methylaminomethyl-S-(2E)-geranyl-thiouridine(34) in tRNA + diphosphate. The catalysed reaction is 5-methylaminomethyl-S-(2E)-geranyl-thiouridine(34) in tRNA + selenophosphate + H(+) = 5-methylaminomethyl-2-(Se-phospho)selenouridine(34) in tRNA + (2E)-thiogeraniol. It catalyses the reaction 5-methylaminomethyl-2-(Se-phospho)selenouridine(34) in tRNA + H2O = 5-methylaminomethyl-2-selenouridine(34) in tRNA + phosphate. Functionally, involved in the post-transcriptional modification of the uridine at the wobble position (U34) of tRNA(Lys), tRNA(Glu) and tRNA(Gln). Catalyzes the conversion of 2-thiouridine (S2U-RNA) to 2-selenouridine (Se2U-RNA). Acts in a two-step process involving geranylation of 2-thiouridine (S2U) to S-geranyl-2-thiouridine (geS2U) and subsequent selenation of the latter derivative to 2-selenouridine (Se2U) in the tRNA chain. This Shewanella sp. (strain W3-18-1) protein is tRNA 2-selenouridine synthase.